The primary structure comprises 172 residues: Epididymal secretory protein 4 (172 aa).

The first 21 residues, 1-21 (MIAVLLLVFGMTPDYIFPVSA), serve as a signal peptide directing secretion. Cys-82 and Cys-167 are oxidised to a cystine.

Belongs to the calycin superfamily. Lipocalin family. In terms of tissue distribution, secreted by the epididymal epithelial cells.

The protein resides in the secreted. The protein localises to the extracellular space. Its function is as follows. Could transport small hydrophobic molecules into the epididymal fluid during the sperm maturation. Binds to the head region of spermatozoa and plays a key role in sperm maturation. In Zootoca vivipara (Common lizard), this protein is Epididymal secretory protein 4.